Here is a 246-residue protein sequence, read N- to C-terminus: tRNA (guanine-N(1)-)-methyltransferase (246 aa).

S-adenosyl-L-methionine is bound by residues Gly-114 and 134–139 (IGDYIL).

The protein belongs to the RNA methyltransferase TrmD family. As to quaternary structure, homodimer.

The protein resides in the cytoplasm. It catalyses the reaction guanosine(37) in tRNA + S-adenosyl-L-methionine = N(1)-methylguanosine(37) in tRNA + S-adenosyl-L-homocysteine + H(+). Functionally, specifically methylates guanosine-37 in various tRNAs. This Coxiella burnetii (strain RSA 493 / Nine Mile phase I) protein is tRNA (guanine-N(1)-)-methyltransferase.